The primary structure comprises 224 residues: Cutinase 1 (224 aa).

The signal sequence occupies residues Met1 to Ala16. A disulfide bond links Cys46 and Cys125. Residue Ser136 is the Nucleophile of the active site. Cysteines 187 and 194 form a disulfide. The active site involves Asp191. The active-site Proton donor/acceptor is His204.

This sequence belongs to the cutinase family. The 2 disulfide bonds play a critical role in holding the catalytic residues in juxta-position; reduction of the disulfide bridges results in the complete inactivation of the enzyme. In terms of processing, the N-terminus is blocked.

The protein resides in the secreted. It carries out the reaction cutin + H2O = cutin monomers.. With respect to regulation, inhibited by diisopropyl fluorophosphate (DFP). In terms of biological role, catalyzes the hydrolysis of complex carboxylic polyesters found in the cell wall of plants. Degrades cutin, a macromolecule that forms the structure of the plant cuticle. Allows pathogenic fungi to penetrate through the cuticular barrier into the host plant during the initial stage of fungal infection. In Colletotrichum gloeosporioides (Anthracnose fungus), this protein is Cutinase 1 (CUTA).